We begin with the raw amino-acid sequence, 193 residues long: Anthranilate synthase component 2 (193 aa).

The Glutamine amidotransferase type-1 domain occupies 3–193 (DILLLDNVDS…EQTLAWALAK (191 aa)). 57-59 (GPG) serves as a coordination point for L-glutamine. C84 acts as the Nucleophile; for GATase activity in catalysis. Residues Q88 and 134 to 135 (SL) contribute to the L-glutamine site. Active-site for GATase activity residues include H170 and E172.

Heterotetramer consisting of two non-identical subunits: a beta subunit (TrpG) and a large alpha subunit (TrpE).

It carries out the reaction chorismate + L-glutamine = anthranilate + pyruvate + L-glutamate + H(+). It participates in amino-acid biosynthesis; L-tryptophan biosynthesis; L-tryptophan from chorismate: step 1/5. Its function is as follows. Part of a heterotetrameric complex that catalyzes the two-step biosynthesis of anthranilate, an intermediate in the biosynthesis of L-tryptophan. In the first step, the glutamine-binding beta subunit (TrpG) of anthranilate synthase (AS) provides the glutamine amidotransferase activity which generates ammonia as a substrate that, along with chorismate, is used in the second step, catalyzed by the large alpha subunit of AS (TrpE) to produce anthranilate. In the absence of TrpG, TrpE can synthesize anthranilate directly from chorismate and high concentrations of ammonia. This Serratia marcescens protein is Anthranilate synthase component 2 (trpG).